The chain runs to 572 residues: MKTSLQIAAEARLEPIAAIAERLGLPVRYLEPYGRYRGKIDLTFLDDYHDRPLGRYVLVSAITPTPLGEGKTTTAIGLAMALNRIGKRAAVTLRQSSLGPVFGIKGGGAGGGYSQIVPLVESILHLNGDIHAVSQAHNQLAALTDNSWYHGNPLDIDPDRIEIRRVVDVNDRFLRQVMIGLGGKQNGFPRQTGFDISVASELMAILAMVNGVGARAALRDLRSRIGRMVVAFRRDGTPITAEDVRGAGAATVLMREALKPNLMQTIENTPALIHAGPFANIAQGNSSILADLIALRCADYVVTEAGFGVDIGAEKFFNLKCRASGLWPDVAVIVATIRALKAHSGKYDIVAGKPLPPALLHENPDDVISGGANLRRQIENLHQFKVPVIVALNAYPEDTPAEIDAVAHIATTAGAAGMAVSNVYAAGSAGGVDLARLVIEIAERPGPRPVQFLYPLEWSLADKITTIAHRIYGAAAVTFSPTAAAQLAALEDAGFGNLPICMAKTHLSLSHDPALRGAPEGFTFPIREVRLSAGAGFILPIAGTTVTMPGLGAHPAAHQIDIDDEGNIVGLF.

65 to 72 is a binding site for ATP; it reads TPLGEGKT.

This sequence belongs to the formate--tetrahydrofolate ligase family.

The enzyme catalyses (6S)-5,6,7,8-tetrahydrofolate + formate + ATP = (6R)-10-formyltetrahydrofolate + ADP + phosphate. It functions in the pathway one-carbon metabolism; tetrahydrofolate interconversion. This is Formate--tetrahydrofolate ligase from Chloroflexus aurantiacus (strain ATCC 29366 / DSM 635 / J-10-fl).